Consider the following 515-residue polypeptide: Cell division control protein 6 homolog (515 aa).

Residues 1–24 (MPTLRSATASASTAGTASPTAIAT) show a composition bias toward low complexity. Residues 1–70 (MPTLRSATAS…TPKLLSASPR (70 aa)) form a disordered region. Over residues 43–52 (DASQFTSPHK) the composition is skewed to polar residues.

The protein belongs to the CDC6/cdc18 family.

The protein resides in the nucleus. May be involved in the initiation of DNA replication. The polypeptide is Cell division control protein 6 homolog (Oryza sativa subsp. japonica (Rice)).